Reading from the N-terminus, the 337-residue chain is UDP-3-O-acylglucosamine N-acyltransferase 2 (337 aa).

The active-site Proton acceptor is His-238.

This sequence belongs to the transferase hexapeptide repeat family. LpxD subfamily. In terms of assembly, homotrimer.

It carries out the reaction a UDP-3-O-[(3R)-3-hydroxyacyl]-alpha-D-glucosamine + a (3R)-hydroxyacyl-[ACP] = a UDP-2-N,3-O-bis[(3R)-3-hydroxyacyl]-alpha-D-glucosamine + holo-[ACP] + H(+). Its pathway is bacterial outer membrane biogenesis; LPS lipid A biosynthesis. Its function is as follows. Catalyzes the N-acylation of UDP-3-O-acylglucosamine using 3-hydroxyacyl-ACP as the acyl donor. Is involved in the biosynthesis of lipid A, a phosphorylated glycolipid that anchors the lipopolysaccharide to the outer membrane of the cell. This chain is UDP-3-O-acylglucosamine N-acyltransferase 2, found in Francisella tularensis subsp. tularensis (strain FSC 198).